The chain runs to 141 residues: Nucleoside diphosphate kinase (141 aa).

Residues Lys-11, Phe-59, Arg-87, Thr-93, Arg-104, and Asn-114 each contribute to the ATP site. His-117 acts as the Pros-phosphohistidine intermediate in catalysis.

Belongs to the NDK family. In terms of assembly, homotetramer. Mg(2+) serves as cofactor.

The protein localises to the cytoplasm. The enzyme catalyses a 2'-deoxyribonucleoside 5'-diphosphate + ATP = a 2'-deoxyribonucleoside 5'-triphosphate + ADP. It carries out the reaction a ribonucleoside 5'-diphosphate + ATP = a ribonucleoside 5'-triphosphate + ADP. Major role in the synthesis of nucleoside triphosphates other than ATP. The ATP gamma phosphate is transferred to the NDP beta phosphate via a ping-pong mechanism, using a phosphorylated active-site intermediate. This chain is Nucleoside diphosphate kinase, found in Pseudomonas entomophila (strain L48).